A 735-amino-acid chain; its full sequence is Rho GTPase-activating protein SYDE1 (735 aa).

Residues 1 to 253 (MAEPLLRKTF…SPTSFRPYEV (253 aa)) are disordered. The span at 14–31 (RGREKLPRKKSDAKERGH) shows a compositional bias: basic and acidic residues. The span at 35 to 46 (RPEPSPPEPEPQ) shows a compositional bias: pro residues. The span at 47–71 (APEGSQAGAEGPSSPEASRSPARGA) shows a compositional bias: low complexity. Residues 122–131 (PPAPEPPGPQ) show a composition bias toward pro residues. Positions 211 to 221 (GGPGPAAGPGG) are enriched in gly residues. A phosphoserine mark is found at Ser224, Ser231, Ser235, and Ser244. In terms of domain architecture, C2 spans 249 to 366 (RPYEVGPAAR…FRGCQAQQLA (118 aa)). One can recognise a Rho-GAP domain in the interval 398–604 (LPLPLLVERE…YLLQSWPDPR (207 aa)). Ser575 is modified (phosphoserine). 2 disordered regions span residues 608–651 (QSPD…SNRY) and 674–696 (DYDH…PRVT). Phosphoserine is present on residues Ser681 and Ser683.

Palmitoylated. Probably palmitoylated by ZDHHC3 and ZDHHC7. Expressed in trophoblast cells of placental villi.

GTPase activator for the Rho-type GTPases. As a GCM1 downstream effector, it is involved in placental development and positively regulates trophoblast cells migration. It regulates cytoskeletal remodeling by controlling the activity of Rho GTPases including RHOA, CDC42 and RAC1. The polypeptide is Rho GTPase-activating protein SYDE1 (SYDE1) (Homo sapiens (Human)).